A 479-amino-acid chain; its full sequence is MNTILAQQIANEGGVEAWMIAQQHKSLLRFLTCGSVDDGKSTLIGRLLHDTLQIYEDQLSSLHNDSKRHGTQGEKLDLALLVDGLQAEREQGITIDVAYRYFSTERRKFIIADTPGHEQYTRNMATGASTCDLAILLIDARKGVLDQTRRHSFISTLLGIKHLVVAINKMDLVDYREETFARIREDYLTFAEQLPGDLDIRFVPLSALEGDNVAAQSANMRWYSGPTLLEVLETVDIQRAVDRQPMRFPVQYVNRPNLDFRGYAGTLASGSVKVGERIKVLPSGVESSVARIVTFDGDKEEACAGEAITLVLNDDIDISRGDLLLAANETLAPARHAAIDVVWMAEQPLAPGQSYDVKLAGKKTRARIEAIRYQIDINNLTQRDVESLPLNGIGLVEMTFDEPLALDIYQQNPVTGGLIFIDRLSNVTVGAGMVRELDERGATPPVEYSAFELELNALVRRHFPHWDARDLLGDKHGAA.

In terms of domain architecture, tr-type G spans 25-239 (KSLLRFLTCG…EVLETVDIQR (215 aa)). Positions 34–41 (GSVDDGKS) are G1. 34–41 (GSVDDGKS) serves as a coordination point for GTP. Positions 92–96 (GITID) are G2. The segment at 113–116 (DTPG) is G3. Residues 113 to 117 (DTPGH) and 168 to 171 (NKMD) each bind GTP. A G4 region spans residues 168 to 171 (NKMD). Residues 206 to 208 (SAL) are G5.

Belongs to the TRAFAC class translation factor GTPase superfamily. Classic translation factor GTPase family. CysN/NodQ subfamily. In terms of assembly, heterodimer composed of CysD, the smaller subunit, and CysN.

The catalysed reaction is sulfate + ATP + H(+) = adenosine 5'-phosphosulfate + diphosphate. The protein operates within sulfur metabolism; hydrogen sulfide biosynthesis; sulfite from sulfate: step 1/3. With CysD forms the ATP sulfurylase (ATPS) that catalyzes the adenylation of sulfate producing adenosine 5'-phosphosulfate (APS) and diphosphate, the first enzymatic step in sulfur assimilation pathway. APS synthesis involves the formation of a high-energy phosphoric-sulfuric acid anhydride bond driven by GTP hydrolysis by CysN coupled to ATP hydrolysis by CysD. The chain is Sulfate adenylyltransferase subunit 1 from Salmonella typhimurium (strain LT2 / SGSC1412 / ATCC 700720).